Reading from the N-terminus, the 237-residue chain is uncharacterized protein (237 aa).

This is an uncharacterized protein from Methanocaldococcus jannaschii (strain ATCC 43067 / DSM 2661 / JAL-1 / JCM 10045 / NBRC 100440) (Methanococcus jannaschii).